We begin with the raw amino-acid sequence, 409 residues long: Argininosuccinate synthase (409 aa).

ATP is bound by residues 15-23 and Ala-42; that span reads AYSGGLDTS. 2 residues coordinate L-citrulline: Tyr-93 and Ser-98. Gly-123 is an ATP binding site. Residues Thr-125, Asn-129, and Asp-130 each contribute to the L-aspartate site. An L-citrulline-binding site is contributed by Asn-129. Positions 133, 182, 191, 267, and 279 each coordinate L-citrulline.

It belongs to the argininosuccinate synthase family. Type 1 subfamily. In terms of assembly, homotetramer.

It is found in the cytoplasm. It catalyses the reaction L-citrulline + L-aspartate + ATP = 2-(N(omega)-L-arginino)succinate + AMP + diphosphate + H(+). It participates in amino-acid biosynthesis; L-arginine biosynthesis; L-arginine from L-ornithine and carbamoyl phosphate: step 2/3. The chain is Argininosuccinate synthase from Desulfitobacterium hafniense (strain Y51).